The primary structure comprises 130 residues: Follitropin subunit beta (130 aa).

The signal sequence occupies residues 1–20 (MMKLIQLCILFWCWRAICCH). Disulfide bonds link Cys22–Cys70, Cys36–Cys85, Cys39–Cys123, Cys47–Cys101, Cys51–Cys103, and Cys106–Cys113. N-linked (GlcNAc...) asparagine glycans are attached at residues Asn26 and Asn43.

This sequence belongs to the glycoprotein hormones subunit beta family. Heterodimer. The active follitropin is a heterodimer composed of an alpha chain/CGA shared with other hormones and a unique beta chain/FSHB shown here.

It localises to the secreted. Its function is as follows. Together with the alpha chain CGA constitutes follitropin, the follicle-stimulating hormone, and provides its biological specificity to the hormone heterodimer. Binds FSHR, a G protein-coupled receptor, on target cells to activate downstream signaling pathways. Follitropin is involved in follicle development and spermatogenesis in reproductive organs. The sequence is that of Follitropin subunit beta (Fshb) from Mus musculus (Mouse).